We begin with the raw amino-acid sequence, 199 residues long: Protein-methionine-sulfoxide reductase heme-binding subunit MsrQ (199 aa).

The next 4 helical transmembrane spans lie at 8-28 (IIWL…WLFW), 82-102 (LWCF…ELGI), 116-136 (PYLT…LTST), and 153-173 (VVYL…KVLS).

The protein belongs to the MsrQ family. As to quaternary structure, heterodimer of a catalytic subunit (MsrP) and a heme-binding subunit (MsrQ). It depends on FMN as a cofactor. Requires heme b as cofactor.

It is found in the cell inner membrane. In terms of biological role, part of the MsrPQ system that repairs oxidized periplasmic proteins containing methionine sulfoxide residues (Met-O), using respiratory chain electrons. Thus protects these proteins from oxidative-stress damage caused by reactive species of oxygen and chlorine generated by the host defense mechanisms. MsrPQ is essential for the maintenance of envelope integrity under bleach stress, rescuing a wide series of structurally unrelated periplasmic proteins from methionine oxidation, including the primary periplasmic chaperone SurA and the lipoprotein Pal. MsrQ provides electrons for reduction to the reductase catalytic subunit MsrP, using the quinone pool of the respiratory chain. This chain is Protein-methionine-sulfoxide reductase heme-binding subunit MsrQ, found in Salmonella arizonae (strain ATCC BAA-731 / CDC346-86 / RSK2980).